The chain runs to 84 residues: Neurotoxin BmK-M11 (84 aa).

The signal sequence occupies residues 1-19; sequence MNYLVMISFALLLMTGVES. The LCN-type CS-alpha/beta domain occupies 21-83; that stretch reads RDAYIAKPEN…VPIRVPGKCH (63 aa). Disulfide bonds link Cys31–Cys82, Cys35–Cys55, Cys41–Cys65, and Cys45–Cys67. A propeptide (removed by a carboxypeptidase) is located at residue Arg84.

The protein belongs to the long (4 C-C) scorpion toxin superfamily. Sodium channel inhibitor family. Alpha subfamily. As to expression, expressed by the venom gland.

Its subcellular location is the secreted. Functionally, alpha toxins bind voltage-independently at site-3 of sodium channels (Nav) and inhibit the inactivation of the activated channels, thereby blocking neuronal transmission. This recombinant toxin selectively inhibits the fast inactivation of mNav1.4/SCN4A (EC(50)=82.3 nM) (tested in HEK293 cells). The sequence is that of Neurotoxin BmK-M11 from Olivierus martensii (Manchurian scorpion).